The following is a 376-amino-acid chain: UDP-4-amino-4,6-dideoxy-N-acetyl-beta-L-altrosamine transaminase (376 aa).

Substrate contacts are provided by residues Tyr4, 24 to 27 (EILT), Ala54, and Ser176. Lys181 bears the N6-(pyridoxal phosphate)lysine mark. Residues Asn226 and 311 to 314 (QVHY) contribute to the substrate site.

It belongs to the DegT/DnrJ/EryC1 family.

The enzyme catalyses UDP-4-amino-4,6-dideoxy-N-acetyl-beta-L-altrosamine + 2-oxoglutarate = UDP-2-acetamido-2,6-dideoxy-beta-L-arabino-hex-4-ulose + L-glutamate. Catalyzes the second step in the biosynthesis of pseudaminic acid, a sialic-acid-like sugar that is used to modify flagellin. Uses UDP-2-acetamido-2,6-dideoxy-beta-L-arabino-4-hexulose as substrate producing UDP-4-amino-4,6-dideoxy-beta-L-AltNAc. This Campylobacter jejuni subsp. jejuni serotype O:2 (strain ATCC 700819 / NCTC 11168) protein is UDP-4-amino-4,6-dideoxy-N-acetyl-beta-L-altrosamine transaminase (pseC).